The chain runs to 141 residues: Succinate dehydrogenase assembly factor 2, mitochondrial (141 aa).

This sequence belongs to the SDHAF2 family. In terms of assembly, interacts with the flavoprotein subunit within the SDH catalytic dimer.

Its subcellular location is the mitochondrion matrix. Plays an essential role in the assembly of succinate dehydrogenase (SDH), an enzyme complex (also referred to as respiratory complex II) that is a component of both the tricarboxylic acid (TCA) cycle and the mitochondrial electron transport chain, and which couples the oxidation of succinate to fumarate with the reduction of ubiquinone (coenzyme Q) to ubiquinol. Required for flavinylation (covalent attachment of FAD) of the flavoprotein subunit of the SDH catalytic dimer. This Dictyostelium discoideum (Social amoeba) protein is Succinate dehydrogenase assembly factor 2, mitochondrial.